The chain runs to 436 residues: MGQVLPLVTRQGDRIAIVSGLRTPFARQATAFHGIPTVDLGKMVVGELLARSEIPAEVIEQLVFGQVVQMPEAPNIAREIVLGTGMNVHTDAYSVSRACATSFQAVANVAESLMAGTIRAGIAGGADSSSVLPIGVSKKLAYVLVDVNKARTMSQRLKLFSRLRLRDLMPVPPAVAEYSTGLRMGDTAEQMAKTYGITREQQDALAHRSHQRAAQAWSDGKLKEEVMTAFIPPYKQPLVEDNNIRGNSSLADYAKLRPAFDRKHGTVTAANSTPLTDGATAVILMTESRAKELGLVPLGYLRSYAFTAIDVWQDMLLGPAWSTPLALERAGLTMSELTLIDMHEAFAAQTLANIQLLGSERFAREVLGRAHATGEVDDSKFNVLGGSIAYGHPFAATGARMITQTLHELRRRGGGFGLVTACAAGGLGAAMVLEAE.

Cysteine 99 acts as the Acyl-thioester intermediate in catalysis. Catalysis depends on proton acceptor residues histidine 392 and cysteine 422.

This sequence belongs to the thiolase-like superfamily. Thiolase family. Heterotetramer of two alpha chains (FadJ) and two beta chains (FadI).

Its subcellular location is the cytoplasm. The catalysed reaction is an acyl-CoA + acetyl-CoA = a 3-oxoacyl-CoA + CoA. It functions in the pathway lipid metabolism; fatty acid beta-oxidation. Catalyzes the final step of fatty acid oxidation in which acetyl-CoA is released and the CoA ester of a fatty acid two carbons shorter is formed. The chain is 3-ketoacyl-CoA thiolase from Shigella flexneri.